Consider the following 219-residue polypeptide: Ribonuclease T (219 aa).

The 175-residue stretch at 20-194 (VVIDIETAGF…YDSLQTANLF (175 aa)) folds into the Exonuclease domain. The Mg(2+) site is built by Asp-23, Glu-25, His-181, and Asp-186. His-181 (proton donor/acceptor) is an active-site residue.

It belongs to the RNase T family. Homodimer. Mg(2+) serves as cofactor.

Its function is as follows. Trims short 3' overhangs of a variety of RNA species, leaving a one or two nucleotide 3' overhang. Responsible for the end-turnover of tRNA: specifically removes the terminal AMP residue from uncharged tRNA (tRNA-C-C-A). Also appears to be involved in tRNA biosynthesis. This Buchnera aphidicola subsp. Schizaphis graminum (strain Sg) protein is Ribonuclease T.